Consider the following 553-residue polypeptide: Mucolipin-3 (553 aa).

Over 1-62 (MANPEIVISS…FWARGRKPWK (62 aa)) the chain is Cytoplasmic. The tract at residues 52 to 62 (KFWARGRKPWK) is interaction with phosphoinositides. A helical transmembrane segment spans residues 63–83 (LAIQILKIAMVTIQLVLFGLS). At 84–283 (NQMVVAFKEE…VSGSIQKNTH (200 aa)) the chain is on the extracellular side. Residues 104 to 118 (KGYIDRMDDTYAVYT) are extracellular/lumenal pore loop. N-linked (GlcNAc...) asparagine glycosylation occurs at Asn138. A disulfide bridge connects residues Cys159 and Cys185. The N-linked (GlcNAc...) asparagine glycan is linked to Asn205. Cysteines 238 and 269 form a disulfide. The chain crosses the membrane as a helical span at residues 284 to 304 (NMMIFDAFVILTCLVSLILCI). Topologically, residues 305 to 341 (RSVISGLQLQQEFVNFFLLHYKKDVSVSDQMEFVNGW) are cytoplasmic. A helical membrane pass occupies residues 342–362 (YIMIIISDILTIIGSILKMEI). Over 363 to 371 (QAKSLTSYD) the chain is Extracellular. The chain crosses the membrane as a helical span at residues 372-392 (VCSILLGTSTMLVWLGVIRYL). Over 393–414 (GFFAKYNLLILTLQAALPNVIR) the chain is Cytoplasmic. Residues 415–435 (FCCCAAMIYLGYCFCGWIVLG) traverse the membrane as a helical segment. Residues 436 to 443 (PYHNKFRS) lie on the Extracellular side of the membrane. Positions 444-464 (LNMVSECLFSLINGDDMFATF) form an intramembrane region, pore-forming. The Selectivity filter signature appears at 456–459 (NGDD). Residues 465–475 (AKMQQKSYLVW) lie on the Extracellular side of the membrane. The chain crosses the membrane as a helical span at residues 476–497 (LFSRIYLYSFISLFIYMILSLF). The Cytoplasmic segment spans residues 498-553 (IALITDTYETIKHYQQDGFPETELRTFISECKDLPNSGKFRLEDDPPVSLFCCCKK).

Belongs to the transient receptor (TC 1.A.4) family. Polycystin subfamily. MCOLN3 sub-subfamily. Homotetramer. Can heterooligomerize with MCOLN1; heteromeric assemblies have different channel properties as compared to the respective homooligomers and may be tissue-specific. May heterooligomerize with TRPV5 to form a functional distinct ion channel. Interacts with GABARAPL2. N-glycosylated.

It is found in the lysosome membrane. The protein localises to the early endosome membrane. The protein resides in the late endosome membrane. Its subcellular location is the cytoplasmic vesicle. It localises to the autophagosome membrane. It is found in the cell projection. The protein localises to the stereocilium membrane. The catalysed reaction is Ca(2+)(in) = Ca(2+)(out). It carries out the reaction Mg(2+)(in) = Mg(2+)(out). It catalyses the reaction K(+)(in) = K(+)(out). The enzyme catalyses Na(+)(in) = Na(+)(out). Its activity is regulated as follows. Channel activity is activated by PtdIns(3,5)P2 (phosphatidylinositol 3,5-bisphosphate). Inhibited by lumenal H(+) and Na(+). The channel pore shows dynamic behavior and undergoes spontaneous, Ca(2+)-dependent modulation when conducting Ca(2+). Nonselective cation channel probably playing a role in the regulation of membrane trafficking events. Acts as a Ca(2+)-permeable cation channel with inwardly rectifying activity. Mediates release of Ca(2+) from endosomes to the cytoplasm, contributes to endosomal acidification and is involved in the regulation of membrane trafficking and fusion in the endosomal pathway. Also permeable to Mg(2+), Na(+) and K(+). Does not seem to act as mechanosensory transduction channel in inner ear sensory hair cells. Proposed to play a critical role at the cochlear stereocilia ankle-link region during hair-bundle growth. Involved in the regulation of autophagy. Through association with GABARAPL2 may be involved in autophagosome formation possibly providing Ca(2+) for the fusion process. Through a possible and probably tissue-specific heteromerization with MCOLN1 may be at least in part involved in many lysosome-dependent cellular events. Possible heteromeric ion channel assemblies with TRPV5 show pharmacological similarity with TRPML3. This Callithrix jacchus (White-tufted-ear marmoset) protein is Mucolipin-3.